The following is a 179-amino-acid chain: Disulfide bond formation protein B (179 aa).

Topologically, residues 1–14 (MLSYFKELSLRRPA) are cytoplasmic. The helical transmembrane segment at 15–31 (WLLLATLACTLEVTGLY) threads the bilayer. Over 32 to 49 (FQHKLGLIPCVMCIYERV) the chain is Periplasmic. Cys-41 and Cys-44 are oxidised to a cystine. Residues 50-65 (ALTGLLIAGLIALIAP) traverse the membrane as a helical segment. The Cytoplasmic portion of the chain corresponds to 66–72 (NFFLFRW). The chain crosses the membrane as a helical span at residues 73-90 (LALVLWGFSAFKGLSLSI). Topologically, residues 91-146 (KHYDYQANPSPWNQCEFKPQFPQTIPLDEWFPNIFAAGTVNCSEKQWQMLGWGMPE) are periplasmic. A disulfide bond links Cys-105 and Cys-132. Residues 147–165 (WLIVAFSLFMLFFLIVFMS) traverse the membrane as a helical segment. Residues 166-179 (QFKRAKPQYRSVFR) are Cytoplasmic-facing.

This sequence belongs to the DsbB family.

The protein localises to the cell inner membrane. Required for disulfide bond formation in some periplasmic proteins. Acts by oxidizing the DsbA protein. The polypeptide is Disulfide bond formation protein B (Haemophilus ducreyi (strain 35000HP / ATCC 700724)).